We begin with the raw amino-acid sequence, 203 residues long: Outer-membrane lipoprotein LolB (203 aa).

Residues 1–18 form the signal peptide; sequence MTLRSFLIFFLSSLILAG. The N-palmitoyl cysteine moiety is linked to residue Cys19. Cys19 carries the S-diacylglycerol cysteine lipid modification.

It belongs to the LolB family. Monomer.

The protein resides in the cell outer membrane. In terms of biological role, plays a critical role in the incorporation of lipoproteins in the outer membrane after they are released by the LolA protein. The polypeptide is Outer-membrane lipoprotein LolB (Vibrio parahaemolyticus serotype O3:K6 (strain RIMD 2210633)).